Consider the following 284-residue polypeptide: Diaminopimelate epimerase (284 aa).

3 residues coordinate substrate: Asn-20, Gln-53, and Asn-73. Residue Cys-82 is the Proton donor of the active site. Substrate-binding positions include 83 to 84, Asn-167, Asn-200, and 218 to 219; these read GN and ER. Cys-227 (proton acceptor) is an active-site residue. Position 228–229 (228–229) interacts with substrate; the sequence is GS.

Belongs to the diaminopimelate epimerase family. As to quaternary structure, homodimer.

It is found in the cytoplasm. The enzyme catalyses (2S,6S)-2,6-diaminopimelate = meso-2,6-diaminopimelate. Its pathway is amino-acid biosynthesis; L-lysine biosynthesis via DAP pathway; DL-2,6-diaminopimelate from LL-2,6-diaminopimelate: step 1/1. Its function is as follows. Catalyzes the stereoinversion of LL-2,6-diaminopimelate (L,L-DAP) to meso-diaminopimelate (meso-DAP), a precursor of L-lysine and an essential component of the bacterial peptidoglycan. In Xylella fastidiosa (strain M12), this protein is Diaminopimelate epimerase.